A 1081-amino-acid polypeptide reads, in one-letter code: DNA polymerase delta catalytic subunit (1081 aa).

Residues 1–22 form a disordered region; sequence MTSKRPGGSSFQPEVKRKRESD. The Zn(2+) site is built by Cys981, Cys984, Cys998, and Cys1001. Residues 981–1001 form a CysA-type zinc finger; the sequence is CLGCKSVLPRAESENAVCKHC. [4Fe-4S] cluster-binding residues include Cys1030, Cys1033, Cys1043, and Cys1048. The CysB motif signature appears at 1030–1048; that stretch reads CQNCAKTMQDKVNCSARDC.

It belongs to the DNA polymerase type-B family. Heterodimer with subunits of 125 kDa and 50 kDa. The 125 kDa subunit contains the polymerase active site and most likely the active site for the 3'-5' exonuclease activity. Requires [4Fe-4S] cluster as cofactor.

It is found in the nucleus. The enzyme catalyses DNA(n) + a 2'-deoxyribonucleoside 5'-triphosphate = DNA(n+1) + diphosphate. In terms of biological role, possesses two enzymatic activities: DNA synthesis (polymerase) and an exonucleolytic activity that degrades single stranded DNA in the 3'- to 5'-direction. Required with its accessory proteins (proliferating cell nuclear antigen (PCNA) and replication factor C (RFC) or activator 1) for leading strand synthesis. Also involved in completing Okazaki fragments initiated by the DNA polymerase alpha/primase complex. This is DNA polymerase delta catalytic subunit from Caenorhabditis elegans.